A 115-amino-acid chain; its full sequence is DNA-directed RNA polymerase II subunit RPB11-b1 (115 aa).

The protein belongs to the archaeal Rpo11/eukaryotic RPB11/RPC19 RNA polymerase subunit family. As to quaternary structure, component of the RNA polymerase II (Pol II) complex consisting of 12 subunits. As to expression, ubiquitously expressed.

It localises to the nucleus. DNA-dependent RNA polymerase catalyzes the transcription of DNA into RNA using the four ribonucleoside triphosphates as substrates. Component of RNA polymerase II which synthesizes mRNA precursors and many functional non-coding RNAs. Pol II is the central component of the basal RNA polymerase II transcription machinery. It is composed of mobile elements that move relative to each other. RPB11 is part of the core element with the central large cleft. The chain is DNA-directed RNA polymerase II subunit RPB11-b1 (POLR2J2) from Homo sapiens (Human).